The primary structure comprises 920 residues: MANKNAESSSQPPPHVQPNQQQQQQPPIANEQEQEPHGDTCSIPPAQSGNTDSRSRGGNTVFKSGPLSISSKGIGWTSWKKRWFILTRTSLVFFRSDPSAVQQKGSEVNLTLGGIDLNNSGSVVVKADKKLLTVLFPDGRDGRAFTLKADTMEDLHEWKAALENALTQAPSASHVMGQNGIFRNDHADPAVGVDEKKDETPTKSTVLGRPVLLALEDVDGAPSFLEKALRFVENHGVRIEGILRQAADVDDVEHRIREYEKGKNEFSPEEDAHIIADCLKYFLRELPSSPVPASCCNALLEACRTDRGNRVNAMRAAICESFPEPNRRLLQRILMMMQTVASNKTVNRMNTNAVAACMAPLLLRPLLAGDCEIENDFDVGGDGSMQLLQAAAAANHAQAIVITLLEEYESIFGEGSLSPGLYSDSEESGSGTEEGSDDEEYDDDDDGSQGSEDYTDEEEDLENESNGSYSESAASEDKYADSIDPDDHKINDNLSTESKSPKRSKEPKKLLSGSRRSSLPRHDDGKKDEDIVVKGVNNTEVKAVVEVSTSEDKNSSTSDVASDTQKPSKLSDAPGGSKRHWGRTPGKKNLSMESIDFSVEVDEDNADIERLESTKLELQSRITEEVKSNAVLQASLERRKKALYGRRQALEQDVGRLQEQLQQERDRKLALETGLNMSKGNQPIPETIDENLKKDLQEVAQAEADIAKLEHKVDDLENRLGHHDGKASGSTHSASKESRKLPEHNAKMKEKQKDTEAASTHISERSTSKDGQGAARENETEKQQDSRSKSSQQETSRGSSKLVGLSKRSGTKGEGSTTTTSALSKLTMRLNFLKERRSQIANELQNMDKGKTLGQPSPTSGQNRVSEETEKGSGSNQDPDSSKLQSPHILDRGRSENGGDRGRGSSGGNHPNTTPRTFSR.

Polar residues predominate over residues 1-10; that stretch reads MANKNAESSS. The disordered stretch occupies residues 1–64; the sequence is MANKNAESSS…SRGGNTVFKS (64 aa). Residues 17–31 show a composition bias toward low complexity; that stretch reads QPNQQQQQQPPIANE. The span at 45–64 shows a compositional bias: polar residues; sequence PAQSGNTDSRSRGGNTVFKS. In terms of domain architecture, PH spans 60–167; the sequence is TVFKSGPLSI…WKAALENALT (108 aa). Positions 213–412 constitute a Rho-GAP domain; sequence LALEDVDGAP…TLLEEYESIF (200 aa). Disordered stretches follow at residues 417-592, 719-825, and 837-920; these read LSPG…NLSM, RLGH…ALSK, and RSQI…TFSR. The span at 434–463 shows a compositional bias: acidic residues; sequence EGSDDEEYDDDDDGSQGSEDYTDEEEDLEN. The segment covering 464 to 473 has biased composition (polar residues); it reads ESNGSYSESA. Basic and acidic residues-rich tracts occupy residues 475–491, 499–509, and 520–532; these read SEDKYADSIDPDDHKIN, KSPKRSKEPKK, and PRHDDGKKDEDIV. The span at 555–568 shows a compositional bias: polar residues; that stretch reads SSTSDVASDTQKPS. Positions 577–586 are enriched in basic residues; the sequence is SKRHWGRTPG. Residues 598–728 adopt a coiled-coil conformation; the sequence is SVEVDEDNAD…RLGHHDGKAS (131 aa). Basic and acidic residues-rich tracts occupy residues 734–768 and 776–788; these read ASKESRKLPEHNAKMKEKQKDTEAASTHISERSTS and RENETEKQQDSRS. Over residues 814–825 the composition is skewed to low complexity; it reads EGSTTTTSALSK. Polar residues-rich tracts occupy residues 854-864 and 872-885; these read GQPSPTSGQNR and GSGSNQDPDSSKLQ. The span at 889–903 shows a compositional bias: basic and acidic residues; the sequence is ILDRGRSENGGDRGR. Residues 910–920 show a composition bias toward polar residues; sequence HPNTTPRTFSR.

In terms of assembly, interacts with ARAC11/ROP1. As to expression, expressed in pollen and pollen tubes.

It localises to the cell membrane. Functionally, acts as a GTPase activator for the Rac-type GTPase by converting it to an inactive GDP-bound state. Maintains the global inactivation of ARAC11/ROP1 at the apex in pollen tubes in order to regulate the polar cell growth. In Arabidopsis thaliana (Mouse-ear cress), this protein is Rho GTPase-activating protein REN1 (REN1).